A 449-amino-acid polypeptide reads, in one-letter code: UDP-N-acetylmuramoylalanine--D-glutamate ligase (449 aa).

118–124 is an ATP binding site; sequence GTNGKTT.

Belongs to the MurCDEF family.

It is found in the cytoplasm. The catalysed reaction is UDP-N-acetyl-alpha-D-muramoyl-L-alanine + D-glutamate + ATP = UDP-N-acetyl-alpha-D-muramoyl-L-alanyl-D-glutamate + ADP + phosphate + H(+). The protein operates within cell wall biogenesis; peptidoglycan biosynthesis. Cell wall formation. Catalyzes the addition of glutamate to the nucleotide precursor UDP-N-acetylmuramoyl-L-alanine (UMA). This Staphylococcus aureus (strain MRSA252) protein is UDP-N-acetylmuramoylalanine--D-glutamate ligase.